The primary structure comprises 471 residues: Pachytene checkpoint protein 2 homolog (471 aa).

213–220 is a binding site for ATP; the sequence is GPPGTGKT.

Belongs to the AAA ATPase family. PCH2 subfamily.

Plays a key role in chromosome recombination during meiosis. The chain is Pachytene checkpoint protein 2 homolog from Oryza sativa subsp. indica (Rice).